The following is a 470-amino-acid chain: Ribulose bisphosphate carboxylase large chain (470 aa).

2 residues coordinate substrate: Asn115 and Thr165. Lys167 acts as the Proton acceptor in catalysis. Lys169 lines the substrate pocket. Mg(2+) is bound by residues Lys193, Asp195, and Glu196. The residue at position 193 (Lys193) is an N6-carboxylysine. His286 functions as the Proton acceptor in the catalytic mechanism. 3 residues coordinate substrate: Arg287, His319, and Ser371.

It belongs to the RuBisCO large chain family. Type I subfamily. Heterohexadecamer of 8 large chains and 8 small chains. Forms a CsoS2-CsoS1-RuBisCO complex. Mg(2+) serves as cofactor.

It is found in the carboxysome. It carries out the reaction 2 (2R)-3-phosphoglycerate + 2 H(+) = D-ribulose 1,5-bisphosphate + CO2 + H2O. It catalyses the reaction D-ribulose 1,5-bisphosphate + O2 = 2-phosphoglycolate + (2R)-3-phosphoglycerate + 2 H(+). In terms of biological role, ruBisCO catalyzes two reactions: the carboxylation of D-ribulose 1,5-bisphosphate, the primary event in carbon dioxide fixation, as well as the oxidative fragmentation of the pentose substrate in the photorespiration process. Both reactions occur simultaneously and in competition at the same active site. This Prochlorococcus marinus (strain MIT 9313) protein is Ribulose bisphosphate carboxylase large chain.